A 548-amino-acid chain; its full sequence is Protein swallow (548 aa).

Disordered regions lie at residues 67 to 109, 184 to 206, and 358 to 428; these read AKTC…GRSS, NCQT…SSSF, and FSSV…ELIS. Over residues 79–91 the composition is skewed to acidic residues; it reads QEDEDDYDEDVDG. Residues 189 to 205 are compositionally biased toward low complexity; that stretch reads SNSDSNYNSNSNNSSSS. S362 and S368 each carry phosphoserine. Polar residues predominate over residues 388–402; sequence APNNSETSQPSSNDS. Basic and acidic residues predominate over residues 406–420; the sequence is VEAHEEERPSSRRQW. Phosphoserine is present on residues S463, S471, S475, S483, S485, and S487.

In terms of assembly, may be a homo- or heterodimer.

It localises to the nucleus. Its function is as follows. Has a role in localizing bicoid mRNA at the anterior margin of the oocyte during oogenesis, and a poorly characterized role in nuclear divisions in early embryogenesis. This chain is Protein swallow (swa), found in Drosophila melanogaster (Fruit fly).